The following is a 28-amino-acid chain: Phospholipase A2 (28 aa).

Ca(2+) is bound at residue Gly28.

The cofactor is Ca(2+). As to expression, expressed by the venom gland.

The protein localises to the secreted. It catalyses the reaction a 1,2-diacyl-sn-glycero-3-phosphocholine + H2O = a 1-acyl-sn-glycero-3-phosphocholine + a fatty acid + H(+). PLA2 catalyzes the calcium-dependent hydrolysis of the 2-acyl groups in 3-sn-phosphoglycerides. The polypeptide is Phospholipase A2 (Scolopendra dehaani (Thai centipede)).